The chain runs to 270 residues: Centromere protein Q (270 aa).

Residues 1–59 (MSGKANTSKKKSQRVKRNVKQRADKEDEELDSPENKVGNRAKRNRSHAGHLSSKEQTKC) form a disordered region. 2 stretches are compositionally biased toward basic residues: residues 7–20 (TSKK…RNVK) and 39–48 (NRAKRNRSHA). Position 52 is a phosphoserine (S52). Residues 143–205 (LKVEREQERA…EEEMKEVFHI (63 aa)) are a coiled coil.

The protein belongs to the CENP-Q/OKP1 family. Component of the CENPA-CAD complex, composed of CENPI, CENPK, CENPL, CENPO, CENPP, CENPQ, CENPR and CENPS. The CENPA-CAD complex interacts with the CENPA-NAC complex, at least composed of CENPA, CENPC, CENPH, CENPM, CENPN, CENPT and CENPU. Phosphorylation at Ser-52 is essential for CENPE recruitment to kinetochores and orderly chromosome congression.

The protein resides in the nucleus. It localises to the chromosome. The protein localises to the centromere. Its function is as follows. Component of the CENPA-CAD (nucleosome distal) complex, a complex recruited to centromeres which is involved in assembly of kinetochore proteins, mitotic progression and chromosome segregation. May be involved in incorporation of newly synthesized CENPA into centromeres via its interaction with the CENPA-NAC complex. Plays an important role in chromosome congression and in the recruitment of CENP-O complex (which comprises CENPO, CENPP, CENPQ and CENPU), CENPE and PLK1 to the kinetochores. The protein is Centromere protein Q (Cenpq) of Rattus norvegicus (Rat).